We begin with the raw amino-acid sequence, 365 residues long: Peptide chain release factor 2 (365 aa).

An N5-methylglutamine modification is found at Gln-252.

The protein belongs to the prokaryotic/mitochondrial release factor family. In terms of processing, methylated by PrmC. Methylation increases the termination efficiency of RF2.

It localises to the cytoplasm. Peptide chain release factor 2 directs the termination of translation in response to the peptide chain termination codons UGA and UAA. In Aliivibrio fischeri (strain ATCC 700601 / ES114) (Vibrio fischeri), this protein is Peptide chain release factor 2.